The chain runs to 120 residues: Large ribosomal subunit protein uL18 (120 aa).

The protein belongs to the universal ribosomal protein uL18 family. Part of the 50S ribosomal subunit; part of the 5S rRNA/L5/L18/L25 subcomplex. Contacts the 5S and 23S rRNAs.

In terms of biological role, this is one of the proteins that bind and probably mediate the attachment of the 5S RNA into the large ribosomal subunit, where it forms part of the central protuberance. The polypeptide is Large ribosomal subunit protein uL18 (Chloroflexus aggregans (strain MD-66 / DSM 9485)).